A 116-amino-acid chain; its full sequence is NADH-ubiquinone oxidoreductase chain 3 (116 aa).

3 helical membrane-spanning segments follow: residues 8 to 28 (VAAT…LPSL), 56 to 76 (FFLV…LLPL), and 87 to 107 (ISLL…IYEW).

Belongs to the complex I subunit 3 family.

Its subcellular location is the mitochondrion membrane. The catalysed reaction is a ubiquinone + NADH + 5 H(+)(in) = a ubiquinol + NAD(+) + 4 H(+)(out). Core subunit of the mitochondrial membrane respiratory chain NADH dehydrogenase (Complex I) that is believed to belong to the minimal assembly required for catalysis. Complex I functions in the transfer of electrons from NADH to the respiratory chain. The immediate electron acceptor for the enzyme is believed to be ubiquinone. This chain is NADH-ubiquinone oxidoreductase chain 3 (MT-ND3), found in Squalus acanthias (Spiny dogfish).